The sequence spans 765 residues: AMP deaminase 3 (765 aa).

2 positions are modified to phosphoserine: S85 and S106. Zn(2+) is bound by residues H315 and H317. Substrate is bound by residues H317 and 386–391 (KFNSKY). A Zn(2+)-binding site is contributed by H584. Residue E587 coordinates substrate. Catalysis depends on H606, which acts as the Proton acceptor. Position 661 (D661) interacts with Zn(2+). 662-665 (DPMQ) serves as a coordination point for substrate.

The protein belongs to the metallo-dependent hydrolases superfamily. Adenosine and AMP deaminases family. As to quaternary structure, homotetramer. Zn(2+) serves as cofactor. As to expression, expressed in adult tissues such as aorta, heart, kidney, lung, muscle and thyroid. Weakly expressed in thyroid and not detected in liver.

The catalysed reaction is AMP + H2O + H(+) = IMP + NH4(+). It functions in the pathway purine metabolism; IMP biosynthesis via salvage pathway; IMP from AMP: step 1/1. AMP deaminase plays a critical role in energy metabolism. In Rattus norvegicus (Rat), this protein is AMP deaminase 3.